Reading from the N-terminus, the 837-residue chain is Striatin-interacting protein 1 (837 aa).

At Met-1 the chain carries N-acetylmethionine. Positions 1–67 are disordered; sequence MEPAAGTPGP…DSEGYSESPD (67 aa). Pro residues predominate over residues 18-35; sequence PQPPPPPPPATAQPPPGA. Positions 47–60 are enriched in basic and acidic residues; the sequence is KAREFNRNQRKDSE. 3 positions are modified to phosphoserine: Ser-59, Ser-335, and Ser-339. Positions 336–423 are disordered; the sequence is PPASASDLIE…DRLTCPKGLP (88 aa). The segment covering 356–377 has biased composition (basic and acidic residues); sequence KALIKQDNLDAFNERDPYKADD. Positions 378–391 are enriched in acidic residues; sequence SREEEEENDDDNSL. Ser-788 bears the Phosphoserine mark. Positions 796–837 are required for STRIPAK core complex formation; the sequence is DNCLQSVLGQRVDLPEDFQMNYDLWLEREVFSKPISWEELLQ.

It belongs to the STRIP family. In terms of assembly, part of the core of STRIPAK complexes composed of PP2A catalytic and scaffolding subunits, the striatins (PP2A regulatory subunits), the striatin-associated proteins MOB4, STRIP1 and STRIP2, PDCD10 and members of the STE20 kinases, such as STK24 and STK26. The STRIPAK complex can be extended by adapter proteins such as SLMAP:SIKE1, CTTNBP2 or CTTNBP2NL. Interacts with CDC42BPB. Interacts with CTTNBP2NL.

The protein resides in the cytoplasm. In terms of biological role, plays a role in the regulation of cell morphology and cytoskeletal organization. Required in the cortical actin filament dynamics and cell shape. Part of the striatin-interacting phosphatase and kinase (STRIPAK) complexes. STRIPAK complexes have critical roles in protein (de)phosphorylation and are regulators of multiple signaling pathways including Hippo, MAPK, nuclear receptor and cytoskeleton remodeling. Different types of STRIPAK complexes are involved in a variety of biological processes such as cell growth, differentiation, apoptosis, metabolism and immune regulation. The protein is Striatin-interacting protein 1 (STRIP1) of Bos taurus (Bovine).